We begin with the raw amino-acid sequence, 620 residues long: Chaperone protein HscA homolog (620 aa).

It belongs to the heat shock protein 70 family.

Functionally, chaperone involved in the maturation of iron-sulfur cluster-containing proteins. Has a low intrinsic ATPase activity which is markedly stimulated by HscB. In Shewanella sediminis (strain HAW-EB3), this protein is Chaperone protein HscA homolog.